We begin with the raw amino-acid sequence, 497 residues long: Envelope glycoprotein E (497 aa).

Over 1–398 (MCVFQILIIV…GTIIYDILLT (398 aa)) the chain is Virion surface. 7 N-linked (GlcNAc...) asparagine; by host glycosylation sites follow: asparagine 60, asparagine 133, asparagine 148, asparagine 203, asparagine 277, asparagine 366, and asparagine 388. A helical membrane pass occupies residues 399 to 419 (SLSIGAIIIVIVGGVCIAILI). Residues 420–497 (RRRRRRRTRG…KIRKRLDLYH (78 aa)) are Intravirion-facing.

Belongs to the alphaherpesvirinae glycoprotein E family. As to quaternary structure, interacts with gI. Phosphorylated within the acidic cluster. Phosphorylation determines whether endocytosed viral gE traffics to the trans-Golgi network or recycles to the cell membrane.

It is found in the virion membrane. The protein resides in the host cell membrane. It localises to the host cell junction. Its subcellular location is the host Golgi apparatus membrane. The protein localises to the host endosome membrane. Functionally, in epithelial cells, the heterodimer gE/gI is required for the cell-to-cell spread of the virus, by sorting nascent virions to cell junctions. Once the virus reaches the cell junctions, virus particles can spread to adjacent cells extremely rapidly through interactions with cellular receptors that accumulate at these junctions. Implicated in basolateral spread in polarized cells. In neuronal cells, gE/gI is essential for the anterograde spread of the infection throughout the host nervous system. Together with US9, the heterodimer gE/gI is involved in the sorting and transport of viral structural components toward axon tips. The sequence is that of Envelope glycoprotein E (MDV096) from Gallus gallus (Chicken).